The sequence spans 433 residues: C2H2 type master regulator of conidiophore development brlA (433 aa).

Disordered stretches follow at residues proline 23–serine 54 and threonine 238–glycine 268. Over residues threonine 30–serine 48 the composition is skewed to low complexity. The span at threonine 238–serine 264 shows a compositional bias: polar residues. 2 consecutive C2H2-type zinc fingers follow at residues phenylalanine 321–histidine 345 and histidine 351–histidine 376. Residues glutamate 391–cysteine 423 are disordered.

It is found in the nucleus. In terms of biological role, brlA, abaA and wetA are pivotal regulators of conidiophore development and conidium maturation. They act individually and together to regulate their own expression and that of numerous other sporulation-specific genes. Binds promoters of target genes at brlA response elements (BREs) containing the conserved sequence 5'-(C/A)(A/G)AGGG(G/A)-3'. The sequence is that of C2H2 type master regulator of conidiophore development brlA from Penicillium camemberti (strain FM 013).